The chain runs to 37 residues: Large ribosomal subunit protein bL36A (37 aa).

This sequence belongs to the bacterial ribosomal protein bL36 family.

This Actinobacillus pleuropneumoniae serotype 3 (strain JL03) protein is Large ribosomal subunit protein bL36A.